We begin with the raw amino-acid sequence, 352 residues long: Threonine synthase (352 aa).

The residue at position 59 (Lys-59) is an N6-(pyridoxal phosphate)lysine. Pyridoxal 5'-phosphate-binding positions include Asn-85, 185–189 (GNAGN), and Thr-314.

The protein belongs to the threonine synthase family. Pyridoxal 5'-phosphate is required as a cofactor.

The enzyme catalyses O-phospho-L-homoserine + H2O = L-threonine + phosphate. Its pathway is amino-acid biosynthesis; L-threonine biosynthesis; L-threonine from L-aspartate: step 5/5. Catalyzes the gamma-elimination of phosphate from L-phosphohomoserine and the beta-addition of water to produce L-threonine. In Bacillus sp. (strain ULM1), this protein is Threonine synthase (thrC).